The primary structure comprises 421 residues: UDP-N-acetylglucosamine 1-carboxyvinyltransferase (421 aa).

24-25 (KN) serves as a coordination point for phosphoenolpyruvate. UDP-N-acetyl-alpha-D-glucosamine is bound at residue arginine 93. Cysteine 117 serves as the catalytic Proton donor. A 2-(S-cysteinyl)pyruvic acid O-phosphothioketal modification is found at cysteine 117. UDP-N-acetyl-alpha-D-glucosamine-binding residues include aspartate 307 and isoleucine 329.

It belongs to the EPSP synthase family. MurA subfamily.

The protein resides in the cytoplasm. It carries out the reaction phosphoenolpyruvate + UDP-N-acetyl-alpha-D-glucosamine = UDP-N-acetyl-3-O-(1-carboxyvinyl)-alpha-D-glucosamine + phosphate. Its pathway is cell wall biogenesis; peptidoglycan biosynthesis. Functionally, cell wall formation. Adds enolpyruvyl to UDP-N-acetylglucosamine. The protein is UDP-N-acetylglucosamine 1-carboxyvinyltransferase of Blochmanniella pennsylvanica (strain BPEN).